A 218-amino-acid chain; its full sequence is Probable nicotinate-nucleotide adenylyltransferase (218 aa).

This sequence belongs to the NadD family.

The enzyme catalyses nicotinate beta-D-ribonucleotide + ATP + H(+) = deamido-NAD(+) + diphosphate. It functions in the pathway cofactor biosynthesis; NAD(+) biosynthesis; deamido-NAD(+) from nicotinate D-ribonucleotide: step 1/1. Its function is as follows. Catalyzes the reversible adenylation of nicotinate mononucleotide (NaMN) to nicotinic acid adenine dinucleotide (NaAD). This is Probable nicotinate-nucleotide adenylyltransferase from Syntrophotalea carbinolica (strain DSM 2380 / NBRC 103641 / GraBd1) (Pelobacter carbinolicus).